The following is a 321-amino-acid chain: Protein translocase subunit SecF (321 aa).

The next 6 helical transmembrane spans lie at 23–43 (VWLISGFAVLISFLGFFFSWT), 158–178 (LQTTLISLLVAFSCVAIYISI), 189–209 (LLALFHDVLIVCGVFSWLGII), 217–237 (LFAVALLTIAGYSVNDTVVVF), 258–280 (FAVSATLTRTLYTSGTTLLPLIA), and 290–312 (YWFAIALALGVVVGSWSSIALVP).

The protein belongs to the SecD/SecF family. SecF subfamily. Forms a complex with SecD. Part of the essential Sec protein translocation apparatus which comprises SecA, SecYEG and auxiliary proteins SecDF. Other proteins may also be involved.

Its subcellular location is the cell inner membrane. Its function is as follows. Part of the Sec protein translocase complex. Interacts with the SecYEG preprotein conducting channel. SecDF uses the proton motive force (PMF) to complete protein translocation after the ATP-dependent function of SecA. Probably participates in protein translocation into and across both the cytoplasmic and thylakoid membranes in cyanobacterial cells. In Prochlorococcus marinus (strain SARG / CCMP1375 / SS120), this protein is Protein translocase subunit SecF.